We begin with the raw amino-acid sequence, 294 residues long: tRNA pseudouridine synthase B (294 aa).

Catalysis depends on aspartate 39, which acts as the Nucleophile.

Belongs to the pseudouridine synthase TruB family. Type 1 subfamily.

The enzyme catalyses uridine(55) in tRNA = pseudouridine(55) in tRNA. Responsible for synthesis of pseudouridine from uracil-55 in the psi GC loop of transfer RNAs. The chain is tRNA pseudouridine synthase B from Streptococcus pyogenes serotype M6 (strain ATCC BAA-946 / MGAS10394).